A 100-amino-acid chain; its full sequence is Small ribosomal subunit protein bS21 (100 aa).

The span at E37–R52 shows a compositional bias: basic and acidic residues. The segment at E37–R100 is disordered. Residues R53–L62 are compositionally biased toward basic residues. Positions G84 to R100 are enriched in gly residues.

The protein belongs to the bacterial ribosomal protein bS21 family.

In Rhodopseudomonas palustris (strain BisB5), this protein is Small ribosomal subunit protein bS21.